A 570-amino-acid chain; its full sequence is L-ascorbate oxidase (570 aa).

Residues 1 to 18 form the signal peptide; that stretch reads MGMWWIVAVAILAHTASA. 2 consecutive Plastocyanin-like domains span residues 33–140 and 154–317; these read WPDC…IIDV and FNLL…LNYV. 3 disulfide bridges follow: C36/C219, C98/C557, and C197/C211. Cu cation is bound by residues H77 and H79. N109 carries an N-linked (GlcNAc...) asparagine glycan. Cu cation-binding residues include H121 and H123. The N-linked (GlcNAc...) asparagine glycan is linked to N196. Residues N229, N343, N384, N407, N434, N442, and N458 are each glycosylated (N-linked (GlcNAc...) asparagine). A Plastocyanin-like 3 domain is found at 426-543; the sequence is RNRNAKQGNV…MGMGVVFAEG (118 aa). 8 residues coordinate Cu cation: H463, H466, H468, H525, C526, H527, H531, and M536.

The protein belongs to the multicopper oxidase family. As to quaternary structure, dimer. Cu cation is required as a cofactor.

The protein resides in the secreted. The catalysed reaction is 4 L-ascorbate + O2 = 4 monodehydro-L-ascorbate radical + 2 H2O. It participates in cofactor degradation; L-ascorbate degradation. Its function is as follows. Ascorbate oxidase involved in a redox system involving ascorbic acid (AsA). The oxidation of AsA represses responses to high salinity and oxidative stress conditions such as vegetative growth and seed production reductions. Negative regulator of defense responses toward incompatible Turnip mosaic virus (TuMV strain UK1) by preventing jasmonic acid (JA)- dependent accumulation of ascorbic acid (AsA, AS) and dehydroascobic acid (DHA). The polypeptide is L-ascorbate oxidase (Brassica rapa subsp. pekinensis (Chinese cabbage)).